A 652-amino-acid polypeptide reads, in one-letter code: p-hydroxybenzoic acid efflux pump subunit AaeB (652 aa).

The next 11 helical transmembrane spans lie at 8–28 (FPIK…HFNL), 34–54 (AVMT…GDPF), 64–84 (LRII…IATI), 88–108 (ALMM…SSLI), 118–138 (LAGY…SVLL), 149–169 (EIII…PRSV), 367–387 (LFWL…LAVI), 404–424 (FLYG…VIMP), 429–449 (SMLL…ILIQ), 453–473 (IGTL…NPMT), and 480–500 (LDNA…ILLI).

This sequence belongs to the aromatic acid exporter ArAE (TC 2.A.85) family.

Its subcellular location is the cell inner membrane. Its function is as follows. Forms an efflux pump with AaeA. Could function as a metabolic relief valve, allowing to eliminate certain compounds when they accumulate to high levels in the cell. This is p-hydroxybenzoic acid efflux pump subunit AaeB from Erwinia billingiae (strain Eb661).